A 172-amino-acid polypeptide reads, in one-letter code: Peptidyl-prolyl cis-trans isomerase (172 aa).

The 159-residue stretch at 10–168 folds into the PPIase cyclophilin-type domain; the sequence is YFDVYANEES…YRIEIRDCGV (159 aa).

Belongs to the cyclophilin-type PPIase family.

The protein localises to the cytoplasm. It carries out the reaction [protein]-peptidylproline (omega=180) = [protein]-peptidylproline (omega=0). In terms of biological role, PPIases accelerate the folding of proteins. They catalyze the cis-trans isomerization of proline imidic peptide bonds in oligopeptides. This Encephalitozoon cuniculi (strain GB-M1) (Microsporidian parasite) protein is Peptidyl-prolyl cis-trans isomerase (CPR1).